We begin with the raw amino-acid sequence, 149 residues long: Large-conductance mechanosensitive channel (149 aa).

The next 3 helical transmembrane spans lie at 16 to 36 (VMDL…VNSV), 40 to 60 (LIMP…KFIL), and 89 to 109 (GSFI…FMMV).

This sequence belongs to the MscL family. Homopentamer.

The protein resides in the cell inner membrane. Functionally, channel that opens in response to stretch forces in the membrane lipid bilayer. May participate in the regulation of osmotic pressure changes within the cell. The sequence is that of Large-conductance mechanosensitive channel from Paraburkholderia phymatum (strain DSM 17167 / CIP 108236 / LMG 21445 / STM815) (Burkholderia phymatum).